Consider the following 121-residue polypeptide: Small ribosomal subunit protein uS13 (121 aa).

The tract at residues 93–121 is disordered; the sequence is RGLPVRGQNTKNNARTRKGPRRTVANKKK. Basic residues predominate over residues 106–121; the sequence is ARTRKGPRRTVANKKK.

The protein belongs to the universal ribosomal protein uS13 family. As to quaternary structure, part of the 30S ribosomal subunit. Forms a loose heterodimer with protein S19. Forms two bridges to the 50S subunit in the 70S ribosome.

Located at the top of the head of the 30S subunit, it contacts several helices of the 16S rRNA. In the 70S ribosome it contacts the 23S rRNA (bridge B1a) and protein L5 of the 50S subunit (bridge B1b), connecting the 2 subunits; these bridges are implicated in subunit movement. Contacts the tRNAs in the A and P-sites. The sequence is that of Small ribosomal subunit protein uS13 from Bacillus pumilus (strain SAFR-032).